The sequence spans 216 residues: Orotate phosphoribosyltransferase (216 aa).

5-phospho-alpha-D-ribose 1-diphosphate contacts are provided by residues Arg-100, Lys-104, His-106, and 126 to 134; that span reads EDLISTGGS. Ser-130 lines the orotate pocket.

It belongs to the purine/pyrimidine phosphoribosyltransferase family. PyrE subfamily. As to quaternary structure, homodimer. Interacts with BrxC. It depends on Mg(2+) as a cofactor.

It catalyses the reaction orotidine 5'-phosphate + diphosphate = orotate + 5-phospho-alpha-D-ribose 1-diphosphate. The protein operates within pyrimidine metabolism; UMP biosynthesis via de novo pathway; UMP from orotate: step 1/2. Functionally, catalyzes the transfer of a ribosyl phosphate group from 5-phosphoribose 1-diphosphate to orotate, leading to the formation of orotidine monophosphate (OMP). The sequence is that of Orotate phosphoribosyltransferase from Bacillus subtilis (strain 168).